The following is a 126-amino-acid chain: Large ribosomal subunit protein bL12 (126 aa).

This sequence belongs to the bacterial ribosomal protein bL12 family. Homodimer. Part of the ribosomal stalk of the 50S ribosomal subunit. Forms a multimeric L10(L12)X complex, where L10 forms an elongated spine to which 2 to 4 L12 dimers bind in a sequential fashion. Binds GTP-bound translation factors.

Its function is as follows. Forms part of the ribosomal stalk which helps the ribosome interact with GTP-bound translation factors. Is thus essential for accurate translation. The polypeptide is Large ribosomal subunit protein bL12 (Elusimicrobium minutum (strain Pei191)).